The following is a 182-amino-acid chain: Core-binding factor subunit beta (182 aa).

Position 173 is a phosphoserine (A173).

The protein belongs to the CBF-beta family. As to quaternary structure, heterodimer with RUNX1, RUNX2 and RUNX3. Interacts with COPRS. Found in a complex with PRMT5 and RUNX1. (Microbial infection) Interacts with HIV-1 Vif; forming an active cullin-5-RING E3 ubiquitin-protein ligase complex (ECS complex).

The protein localises to the nucleus. Its function is as follows. Forms the heterodimeric complex core-binding factor (CBF) with RUNX family proteins (RUNX1, RUNX2, and RUNX3). RUNX members modulate the transcription of their target genes through recognizing the core consensus binding sequence 5'-TGTGGT-3', or very rarely, 5'-TGCGGT-3', within their regulatory regions via their runt domain, while CBFB is a non-DNA-binding regulatory subunit that allosterically enhances the sequence-specific DNA-binding capacity of RUNX. The heterodimers bind to the core site of a number of enhancers and promoters, including murine leukemia virus, polyomavirus enhancer, T-cell receptor enhancers, LCK, IL3 and GM-CSF promoters. CBF complexes repress ZBTB7B transcription factor during cytotoxic (CD8+) T cell development. They bind to RUNX-binding sequence within the ZBTB7B locus acting as transcriptional silencer and allowing for cytotoxic T cell differentiation. (Microbial infection) Following infection, hijacked by the HIV-1 Vif protein, leading to the formation a cullin-5-RING E3 ubiquitin-protein ligase complex (ECS complex) that catalyzes ubiquitination and degradation of APOBEC3F and APOBEC3G. The complex can also ubiquitinate APOBEC3H to some extent. Association with HIV-1 Vif protein also inhibits the transcription coactivator activity of CBFB/CBF-beta. The sequence is that of Core-binding factor subunit beta (CBFB) from Homo sapiens (Human).